We begin with the raw amino-acid sequence, 365 residues long: 2-aminoethylphosphonate--pyruvate transaminase (365 aa).

Lysine 194 carries the N6-(pyridoxal phosphate)lysine modification.

It belongs to the class-V pyridoxal-phosphate-dependent aminotransferase family. PhnW subfamily. As to quaternary structure, homodimer. Requires pyridoxal 5'-phosphate as cofactor.

The catalysed reaction is (2-aminoethyl)phosphonate + pyruvate = phosphonoacetaldehyde + L-alanine. Functionally, involved in phosphonate degradation. This Bacillus cereus (strain AH187) protein is 2-aminoethylphosphonate--pyruvate transaminase.